Here is a 181-residue protein sequence, read N- to C-terminus: HGPRTase-like protein 1 (181 aa).

This sequence belongs to the purine/pyrimidine phosphoribosyltransferase family. Archaeal HPRT subfamily.

In terms of biological role, may catalyze a purine salvage reaction, the substrate is unknown. This chain is HGPRTase-like protein 1, found in Halalkalicoccus jeotgali (strain DSM 18796 / CECT 7217 / JCM 14584 / KCTC 4019 / B3).